We begin with the raw amino-acid sequence, 1108 residues long: Eukaryotic translation initiation factor 2-alpha kinase 3 (1108 aa).

The N-terminal stretch at 1 to 27 (MERATQPRPRALLLLFLLLGCAAGISA) is a signal peptide. Over 28–506 (VARARSLLAP…HYSKNIRKKD (479 aa)) the chain is Lumenal. The segment at 71–92 (EALPAASGEQESRATESDDDVE) is disordered. The N-linked (GlcNAc...) asparagine glycan is linked to Asn253. The helical transmembrane segment at 507–527 (PILLLHWWKEIFGTILLCIVA) threads the bilayer. Over 528 to 1108 (TTFIVRRLFH…SSTFSPLPGN (581 aa)) the chain is Cytoplasmic. The segment at 542-563 (RQRKESETQCQTESKYDSVSAD) is disordered. In terms of domain architecture, Protein kinase spans 585–1069 (FEPIQCMGRG…ATDIIENAVF (485 aa)). Position 591–599 (591–599 (MGRGGFGVV)) interacts with ATP. At Tyr611 the chain carries Phosphotyrosine; by autocatalysis. Lys614 lines the ATP pocket. An insert loop region spans residues 639-880 (EHPGIVRYFN…SPKVYLYIQM (242 aa)). A Phosphoserine modification is found at Ser707. Disordered stretches follow at residues 772–818 (DEGH…RMNR) and 832–856 (FKHSSSRSSSEATLSTSPTRPTTLS). A compositionally biased stretch (polar residues) spans 785 to 798 (SPYTRSREGTSSSI). Thr794 carries the phosphothreonine modification. Positions 837–856 (SRSSSEATLSTSPTRPTTLS) are enriched in low complexity. Residue Asp929 is the Proton acceptor of the active site. At Thr974 the chain carries Phosphothreonine. The segment at 1080-1108 (LRQRSRSLSSSGTKHSRQPSSTFSPLPGN) is disordered. Ser1086 carries the phosphoserine modification. Residues 1097-1108 (QPSSTFSPLPGN) show a composition bias toward polar residues.

It belongs to the protein kinase superfamily. Ser/Thr protein kinase family. GCN2 subfamily. Forms dimers with HSPA5/BIP in resting cells. Homotetramerizes in response to endoplasmic reticulum (ER) stress, leading to its activation. Interacts with HSP90B1/GRP94. Interacts with DNAJC3; inhibiting EIF2AK3/PERK activity. Interacts with ATAD3A; ATAD3A and EIF2S1/eIF-2-alpha occupy a common binding site within the cytoplasmic loop of EIF2AK3/PERK, leading to prevent EIF2AK3/PERK association with its substrate EIF2S1/eIF-2-alpha. Interacts with MFN2. Interacts with TMEM33. Interacts with PDIA6. Interacts with LACC1. Post-translationally, oligomerization of the N-terminal ER luminal domain by ER stress promotes EIF2AK3/PERK trans-autophosphorylation of the C-terminal cytoplasmic kinase domain at multiple residues including Thr-974 on the kinase activation loop. Autophosphorylated at Tyr-611 following endoplasmic reticulum stress, leading to activate its activity. Dephosphorylated at Tyr-611 by PTPN1/PTP1B, leading to inactivate its enzyme activity. Phosphorylation at Thr-794 by AKT (AKT1, AKT2 and/or AKT3) inactivates EIF2AK3/PERK. ADP-ribosylated by PARP16 upon ER stress, which increases kinase activity. In terms of tissue distribution, ubiquitous.

The protein resides in the endoplasmic reticulum membrane. The catalysed reaction is L-seryl-[protein] + ATP = O-phospho-L-seryl-[protein] + ADP + H(+). It carries out the reaction L-threonyl-[protein] + ATP = O-phospho-L-threonyl-[protein] + ADP + H(+). The enzyme catalyses L-tyrosyl-[protein] + ATP = O-phospho-L-tyrosyl-[protein] + ADP + H(+). Inhibited by HSPA5/BIP in absence of stress. Perturbation in protein folding in the endoplasmic reticulum (ER) promotes reversible dissociation from HSPA5/BIP and oligomerization, resulting in trans-autophosphorylation and kinase activity induction. Inactivated following phosphorylation at Thr-794 by AKT (AKT1, AKT2 and/or AKT3). Inhibited by ATAD3A at mitochondria-endoplasmic reticulum contact sites, providing a safe haven for mitochondrial protein translation during ER stress. Metabolic-stress sensing protein kinase that phosphorylates the alpha subunit of eukaryotic translation initiation factor 2 (EIF2S1/eIF-2-alpha) in response to various stress, such as unfolded protein response (UPR). Key effector of the integrated stress response (ISR) to unfolded proteins: EIF2AK3/PERK specifically recognizes and binds misfolded proteins, leading to its activation and EIF2S1/eIF-2-alpha phosphorylation. EIF2S1/eIF-2-alpha phosphorylation in response to stress converts EIF2S1/eIF-2-alpha in a global protein synthesis inhibitor, leading to a global attenuation of cap-dependent translation, while concomitantly initiating the preferential translation of ISR-specific mRNAs, such as the transcriptional activators ATF4 and QRICH1, and hence allowing ATF4- and QRICH1-mediated reprogramming. The EIF2AK3/PERK-mediated unfolded protein response increases mitochondrial oxidative phosphorylation by promoting ATF4-mediated expression of COX7A2L/SCAF1, thereby increasing formation of respiratory chain supercomplexes. In contrast to most subcellular compartments, mitochondria are protected from the EIF2AK3/PERK-mediated unfolded protein response due to EIF2AK3/PERK inhibition by ATAD3A at mitochondria-endoplasmic reticulum contact sites. In addition to EIF2S1/eIF-2-alpha, also phosphorylates NFE2L2/NRF2 in response to stress, promoting release of NFE2L2/NRF2 from the BCR(KEAP1) complex, leading to nuclear accumulation and activation of NFE2L2/NRF2. Serves as a critical effector of unfolded protein response (UPR)-induced G1 growth arrest due to the loss of cyclin-D1 (CCND1). Involved in control of mitochondrial morphology and function. The protein is Eukaryotic translation initiation factor 2-alpha kinase 3 (Eif2ak3) of Rattus norvegicus (Rat).